A 378-amino-acid polypeptide reads, in one-letter code: Quinolinate synthase (378 aa).

The iminosuccinate site is built by His-59 and Ser-80. Cys-125 contributes to the [4Fe-4S] cluster binding site. Residues 151–153 (YAN) and Ser-168 each bind iminosuccinate. Cys-212 serves as a coordination point for [4Fe-4S] cluster. Residues 238–240 (HPE) and Thr-255 each bind iminosuccinate. Cys-309 contacts [4Fe-4S] cluster.

Belongs to the quinolinate synthase family. Type 1 subfamily. [4Fe-4S] cluster is required as a cofactor.

It is found in the cytoplasm. The enzyme catalyses iminosuccinate + dihydroxyacetone phosphate = quinolinate + phosphate + 2 H2O + H(+). Its pathway is cofactor biosynthesis; NAD(+) biosynthesis; quinolinate from iminoaspartate: step 1/1. Its function is as follows. Catalyzes the condensation of iminoaspartate with dihydroxyacetone phosphate to form quinolinate. This chain is Quinolinate synthase, found in Burkholderia orbicola (strain MC0-3).